Reading from the N-terminus, the 173-residue chain is MSIILGIDPGSRVTGYGVIRQNGRHLQYLGSGCIRTSEKDLPGRLKQIYAGVTEIITQFQPDAFAIEQVFMAKNADSALKLGQARGAAIVSAVNHDLPVYEYAARLIKQAVVGTGGADKAQVQHMVQHMLKLPAKPQADAADALGVAICHANTNKTLIALAGQATSAKRGRYR.

Residues Asp8, Glu67, and Asp139 contribute to the active site. 3 residues coordinate Mg(2+): Asp8, Glu67, and Asp139.

It belongs to the RuvC family. Homodimer which binds Holliday junction (HJ) DNA. The HJ becomes 2-fold symmetrical on binding to RuvC with unstacked arms; it has a different conformation from HJ DNA in complex with RuvA. In the full resolvosome a probable DNA-RuvA(4)-RuvB(12)-RuvC(2) complex forms which resolves the HJ. It depends on Mg(2+) as a cofactor.

The protein localises to the cytoplasm. The enzyme catalyses Endonucleolytic cleavage at a junction such as a reciprocal single-stranded crossover between two homologous DNA duplexes (Holliday junction).. In terms of biological role, the RuvA-RuvB-RuvC complex processes Holliday junction (HJ) DNA during genetic recombination and DNA repair. Endonuclease that resolves HJ intermediates. Cleaves cruciform DNA by making single-stranded nicks across the HJ at symmetrical positions within the homologous arms, yielding a 5'-phosphate and a 3'-hydroxyl group; requires a central core of homology in the junction. The consensus cleavage sequence is 5'-(A/T)TT(C/G)-3'. Cleavage occurs on the 3'-side of the TT dinucleotide at the point of strand exchange. HJ branch migration catalyzed by RuvA-RuvB allows RuvC to scan DNA until it finds its consensus sequence, where it cleaves and resolves the cruciform DNA. The protein is Crossover junction endodeoxyribonuclease RuvC of Vibrio vulnificus (strain CMCP6).